The chain runs to 98 residues: NADH-ubiquinone oxidoreductase chain 4L (98 aa).

A run of 3 helical transmembrane segments spans residues 2 to 22 (PSIF…TLVF), 29 to 49 (SLLC…LIIL), and 61 to 81 (ILLL…LVMV).

The protein belongs to the complex I subunit 4L family. In terms of assembly, core subunit of respiratory chain NADH dehydrogenase (Complex I) which is composed of 45 different subunits.

Its subcellular location is the mitochondrion inner membrane. The catalysed reaction is a ubiquinone + NADH + 5 H(+)(in) = a ubiquinol + NAD(+) + 4 H(+)(out). Core subunit of the mitochondrial membrane respiratory chain NADH dehydrogenase (Complex I) which catalyzes electron transfer from NADH through the respiratory chain, using ubiquinone as an electron acceptor. Part of the enzyme membrane arm which is embedded in the lipid bilayer and involved in proton translocation. The sequence is that of NADH-ubiquinone oxidoreductase chain 4L (MT-ND4L) from Avahi laniger (Eastern woolly lemur).